We begin with the raw amino-acid sequence, 440 residues long: Zinc finger MYND domain-containing protein 10 (440 aa).

8 residues coordinate Zn(2+): Cys394, Cys397, Cys405, Cys408, Cys414, Cys418, His426, and Cys430. The MYND-type zinc-finger motif lies at Cys394–Cys430.

The protein belongs to the ZMYND10 family. In terms of assembly, interacts (via C-terminus) with DNAAF11 (via CS domain); this interaction stabilizes DNAAF11 at the protein level. Interacts (via C-terminus) with DNAL1; this interaction stabilizes DNAL1 at the protein level. Interacts with DNAAF4, HSPA8, IQUB, RUVBL2 and DYNTL5. In terms of tissue distribution, expressed in the testis. Expressed in the tracheal epithelium. Restricted to regions containing motile cilia.

The protein localises to the cytoplasm. Its subcellular location is the cytoskeleton. It localises to the microtubule organizing center. The protein resides in the centrosome. It is found in the centriolar satellite. The protein localises to the apical cell membrane. Its subcellular location is the dynein axonemal particle. Its function is as follows. Plays a role in axonemal structure organization and motility. Involved in axonemal pre-assembly of inner and outer dynein arms (IDA and ODA, respectively) for proper axoneme building for cilia motility. May act by indirectly regulating transcription of dynein proteins. This Mus musculus (Mouse) protein is Zinc finger MYND domain-containing protein 10 (Zmynd10).